Here is a 212-residue protein sequence, read N- to C-terminus: Uridine kinase (212 aa).

An ATP-binding site is contributed by 13–20 (GGSGSGKT).

Belongs to the uridine kinase family.

Its subcellular location is the cytoplasm. The enzyme catalyses uridine + ATP = UMP + ADP + H(+). It catalyses the reaction cytidine + ATP = CMP + ADP + H(+). The protein operates within pyrimidine metabolism; CTP biosynthesis via salvage pathway; CTP from cytidine: step 1/3. It functions in the pathway pyrimidine metabolism; UMP biosynthesis via salvage pathway; UMP from uridine: step 1/1. This Bacillus cytotoxicus (strain DSM 22905 / CIP 110041 / 391-98 / NVH 391-98) protein is Uridine kinase.